A 396-amino-acid chain; its full sequence is L-lactate dehydrogenase (396 aa).

The region spanning 1-380 (MIISAASDYR…TQDSLVQGLG (380 aa)) is the FMN hydroxy acid dehydrogenase domain. Position 24 (tyrosine 24) interacts with substrate. Residues serine 106 and glutamine 127 each contribute to the FMN site. Residue tyrosine 129 participates in substrate binding. Residue threonine 155 coordinates FMN. Arginine 164 is a binding site for substrate. Residue lysine 251 coordinates FMN. Catalysis depends on histidine 275, which acts as the Proton acceptor. Residue arginine 278 coordinates substrate. Position 306–330 (306–330 (DSGIRNGLDVVRMIALGADTVLLGR)) interacts with FMN.

The protein belongs to the FMN-dependent alpha-hydroxy acid dehydrogenase family. FMN is required as a cofactor.

Its subcellular location is the cell inner membrane. It carries out the reaction (S)-lactate + A = pyruvate + AH2. Functionally, catalyzes the conversion of L-lactate to pyruvate. Is coupled to the respiratory chain. This is L-lactate dehydrogenase from Shigella boydii serotype 4 (strain Sb227).